We begin with the raw amino-acid sequence, 323 residues long: GDP-mannose 4,6-dehydratase (323 aa).

NADP(+) contacts are provided by residues 11-14, Arg-36, 59-60, and 81-85; these read TGQD, DM, and LAAQS. Residue Thr-126 is part of the active site. Catalysis depends on nucleophile residues Glu-128 and Tyr-150. NADP(+)-binding residues include Lys-154, His-180, and Arg-185.

Belongs to the NAD(P)-dependent epimerase/dehydratase family. GDP-mannose 4,6-dehydratase subfamily. In terms of assembly, homotetramer. It depends on NADP(+) as a cofactor.

The enzyme catalyses GDP-alpha-D-mannose = GDP-4-dehydro-alpha-D-rhamnose + H2O. The protein operates within bacterial outer membrane biogenesis; lipopolysaccharide biosynthesis. In terms of biological role, catalyzes the conversion of GDP-D-mannose to GDP-4-dehydro-6-deoxy-D-mannose. This Pseudomonas aeruginosa (strain ATCC 15692 / DSM 22644 / CIP 104116 / JCM 14847 / LMG 12228 / 1C / PRS 101 / PAO1) protein is GDP-mannose 4,6-dehydratase.